The chain runs to 188 residues: GTP cyclohydrolase 1 (188 aa).

Zn(2+)-binding residues include Cys-76, His-79, and Cys-148.

The protein belongs to the GTP cyclohydrolase I family. As to quaternary structure, toroid-shaped homodecamer, composed of two pentamers of five dimers.

It catalyses the reaction GTP + H2O = 7,8-dihydroneopterin 3'-triphosphate + formate + H(+). It participates in cofactor biosynthesis; 7,8-dihydroneopterin triphosphate biosynthesis; 7,8-dihydroneopterin triphosphate from GTP: step 1/1. The polypeptide is GTP cyclohydrolase 1 (Caldanaerobacter subterraneus subsp. tengcongensis (strain DSM 15242 / JCM 11007 / NBRC 100824 / MB4) (Thermoanaerobacter tengcongensis)).